A 138-amino-acid chain; its full sequence is ATP synthase epsilon chain (138 aa).

Belongs to the ATPase epsilon chain family. F-type ATPases have 2 components, CF(1) - the catalytic core - and CF(0) - the membrane proton channel. CF(1) has five subunits: alpha(3), beta(3), gamma(1), delta(1), epsilon(1). CF(0) has three main subunits: a, b and c.

It is found in the cell membrane. Functionally, produces ATP from ADP in the presence of a proton gradient across the membrane. The protein is ATP synthase epsilon chain of Streptococcus pyogenes serotype M2 (strain MGAS10270).